A 370-amino-acid chain; its full sequence is Phospho-2-dehydro-3-deoxyheptonate aldolase, tyrosine-inhibited (370 aa).

S2 bears the N-acetylserine mark.

This sequence belongs to the class-I DAHP synthase family.

It catalyses the reaction D-erythrose 4-phosphate + phosphoenolpyruvate + H2O = 7-phospho-2-dehydro-3-deoxy-D-arabino-heptonate + phosphate. Its pathway is metabolic intermediate biosynthesis; chorismate biosynthesis; chorismate from D-erythrose 4-phosphate and phosphoenolpyruvate: step 1/7. With respect to regulation, inhibited by tyrosine. Functionally, stereospecific condensation of phosphoenolpyruvate (PEP) and D-erythrose-4-phosphate (E4P) giving rise to 3-deoxy-D-arabino-heptulosonate-7-phosphate (DAHP). The polypeptide is Phospho-2-dehydro-3-deoxyheptonate aldolase, tyrosine-inhibited (ARO4) (Saccharomyces cerevisiae (strain ATCC 204508 / S288c) (Baker's yeast)).